A 358-amino-acid polypeptide reads, in one-letter code: DNA integrity scanning protein DisA (358 aa).

One can recognise a DAC domain in the interval 9 to 147 (KQDLSEILQF…ENMKYILKDI (139 aa)). ATP-binding positions include Gly-76, Leu-94, and 107 to 111 (MRHRT).

Belongs to the DisA family. Homooctamer. It depends on Mg(2+) as a cofactor.

It carries out the reaction 2 ATP = 3',3'-c-di-AMP + 2 diphosphate. Functionally, participates in a DNA-damage check-point that is active prior to asymmetric division when DNA is damaged. DisA forms globular foci that rapidly scan along the chromosomes during sporulation, searching for lesions. When a lesion is present, DisA pauses at the lesion site. This triggers a cellular response that culminates in a temporary block in sporulation initiation. Its function is as follows. Also has diadenylate cyclase activity, catalyzing the condensation of 2 ATP molecules into cyclic di-AMP (c-di-AMP). c-di-AMP acts as a signaling molecule that couples DNA integrity with progression of sporulation. The rise in c-di-AMP level generated by DisA while scanning the chromosome, operates as a positive signal that advances sporulation; upon encountering a lesion, the DisA focus arrests at the damaged site and halts c-di-AMP synthesis. The chain is DNA integrity scanning protein DisA from Bacillus licheniformis (strain ATCC 14580 / DSM 13 / JCM 2505 / CCUG 7422 / NBRC 12200 / NCIMB 9375 / NCTC 10341 / NRRL NRS-1264 / Gibson 46).